The sequence spans 156 residues: Ribosomal RNA large subunit methyltransferase H (156 aa).

S-adenosyl-L-methionine contacts are provided by residues L73, G104, and L123–L128.

Belongs to the RNA methyltransferase RlmH family. As to quaternary structure, homodimer.

The protein resides in the cytoplasm. It catalyses the reaction pseudouridine(1915) in 23S rRNA + S-adenosyl-L-methionine = N(3)-methylpseudouridine(1915) in 23S rRNA + S-adenosyl-L-homocysteine + H(+). In terms of biological role, specifically methylates the pseudouridine at position 1915 (m3Psi1915) in 23S rRNA. The protein is Ribosomal RNA large subunit methyltransferase H of Edwardsiella ictaluri (strain 93-146).